We begin with the raw amino-acid sequence, 403 residues long: Phosphoglycerate kinase (403 aa).

Substrate is bound by residues 21 to 23, R36, 59 to 62, R119, and R154; these read DFN and HLGR. ATP-binding positions include K207, G299, E330, and 357-360; that span reads GGDA.

This sequence belongs to the phosphoglycerate kinase family. Monomer.

Its subcellular location is the cytoplasm. The enzyme catalyses (2R)-3-phosphoglycerate + ATP = (2R)-3-phospho-glyceroyl phosphate + ADP. It participates in carbohydrate degradation; glycolysis; pyruvate from D-glyceraldehyde 3-phosphate: step 2/5. This chain is Phosphoglycerate kinase, found in Chlamydia caviae (strain ATCC VR-813 / DSM 19441 / 03DC25 / GPIC) (Chlamydophila caviae).